The following is a 381-amino-acid chain: cAMP-dependent protein kinase type I-alpha regulatory subunit (381 aa).

Methionine 1 carries the N-acetylmethionine modification. Alanine 2 is subject to N-acetylalanine; in cAMP-dependent protein kinase type I-alpha regulatory subunit, N-terminally processed. Residues 2–136 (ASGSMATSEE…ALAKAIEKNV (135 aa)) form a dimerization and phosphorylation region. Serine 3 bears the Phosphoserine mark. The interval 73–96 (IRTDSREDEISPPPPNPVVKGRRR) is disordered. Position 75 is a phosphothreonine (threonine 75). Serine 77 and serine 83 each carry phosphoserine. Positions 96–100 (RRGAI) match the Pseudophosphorylation motif motif. Serine 101 is subject to Phosphoserine. Residues 137-254 (LFSH…SKVS), glutamate 202, arginine 211, 255-381 (ILES…SLSV), glutamate 326, and arginine 335 contribute to the 3',5'-cyclic AMP site. The residue at position 258 (serine 258) is a Phosphoserine.

Belongs to the cAMP-dependent kinase regulatory chain family. The inactive holoenzyme is composed of two regulatory chains and two catalytic chains. Activation by cAMP releases the two active catalytic monomers and the regulatory dimer. Interacts with PRKACA and PRKACB. PRKAR1A also interacts with RFC2; the complex may be involved in cell survival. Interacts with AKAP4. Interacts with RARA; the interaction occurs in the presence of cAMP or FSH and regulates RARA transcriptional activity. Interacts with the phosphorylated form of PJA2. Interacts with PRKX; regulates this cAMP-dependent protein kinase. Interacts with CBFA2T3. Interacts with smAKAP; this interaction may target PRKAR1A to the plasma membrane. Interacts with AICDA. In terms of processing, the pseudophosphorylation site binds to the substrate-binding region of the catalytic chain, resulting in the inhibition of its activity.

The protein resides in the cell membrane. Functionally, regulatory subunit of the cAMP-dependent protein kinases involved in cAMP signaling in cells. This chain is cAMP-dependent protein kinase type I-alpha regulatory subunit (Prkar1a), found in Mus musculus (Mouse).